A 238-amino-acid polypeptide reads, in one-letter code: 2-C-methyl-D-erythritol 4-phosphate cytidylyltransferase (238 aa).

It belongs to the IspD/TarI cytidylyltransferase family. IspD subfamily.

The enzyme catalyses 2-C-methyl-D-erythritol 4-phosphate + CTP + H(+) = 4-CDP-2-C-methyl-D-erythritol + diphosphate. It functions in the pathway isoprenoid biosynthesis; isopentenyl diphosphate biosynthesis via DXP pathway; isopentenyl diphosphate from 1-deoxy-D-xylulose 5-phosphate: step 2/6. In terms of biological role, catalyzes the formation of 4-diphosphocytidyl-2-C-methyl-D-erythritol from CTP and 2-C-methyl-D-erythritol 4-phosphate (MEP). The chain is 2-C-methyl-D-erythritol 4-phosphate cytidylyltransferase from Paraburkholderia phytofirmans (strain DSM 17436 / LMG 22146 / PsJN) (Burkholderia phytofirmans).